A 64-amino-acid chain; its full sequence is Small hydrophobic protein (64 aa).

Over Met-1–Leu-20 the chain is Intravirion. The interval Ile-6–Trp-15 is interaction with host BCAP31. Residues Ile-21–Leu-44 form a helical; Signal-anchor for type II membrane protein membrane-spanning segment. An interaction with small-molecule inhibitor region spans residues Ile-38–Lys-43. The Virion surface segment spans residues Cys-45–Thr-64. The N-linked (GlcNAc...) asparagine; by host glycan is linked to Asn-52.

The protein belongs to the orthopneumovirus small hydrophobic protein family. As to quaternary structure, homopentamer forming a funnel-like pore. Interacts with glycoprotein G; this interaction occurs on the surface of virion particles and infected cells. Interacts with host BCAP31 (via C-terminus); this interaction is direct. In terms of processing, four species of SH have been detected in infected cell cytoplasm: a 7.5 kDa non-glycosylated form (SH0), a 13-15 kDa form that contains one or two N-linked carbohydrate side chains of the high-mannose type (SHg), a 21-30 kDa polylactosaminoglycan-modified form of the protein (SHp), and the isoform generated by alternative translational initiation. Of these different forms, SH0 is by far the most abundant protein detected during virus infection. Tyrosine phosphorylated.

Its subcellular location is the virion membrane. The protein localises to the host cell membrane. It is found in the host Golgi apparatus membrane. It localises to the host endoplasmic reticulum membrane. Channel activity is inhibited by copper. Also inhibited by small-molecule pyronin B. Viroporin that forms a homopentameric ion channel displaying low ion selectivity. May play a role in virus morphogenesis and pathogenicity at various stages of the viral life cycle. Accumulates at the membrane of the Golgi apparatus in infected cells and may facilitate virus release by modifying the secretory pathway. May enhance host membrane permeability and disrupt cellular ion homeostasis, which can be sensed as damage-associated molecular patterns/danger signals, triggering NLRP3 inflammasome activation and inflammatory immune response. Also inhibits host TNFA-mediated signaling pathway and may delay apoptosis, allowing time for the virus to replicate. The protein is Small hydrophobic protein of Homo sapiens (Human).